The primary structure comprises 374 residues: Queuine tRNA-ribosyltransferase (374 aa).

Residue Asp-92 is the Proton acceptor of the active site. Substrate contacts are provided by residues 92-96 (DSGGY), Asp-146, Gln-193, and Gly-220. The interval 251–257 (GVGKPDD) is RNA binding. Asp-270 functions as the Nucleophile in the catalytic mechanism. The segment at 275-279 (TRSGR) is RNA binding; important for wobble base 34 recognition. Residues Cys-308, Cys-310, Cys-313, and His-339 each coordinate Zn(2+).

The protein belongs to the queuine tRNA-ribosyltransferase family. In terms of assembly, homodimer. Within each dimer, one monomer is responsible for RNA recognition and catalysis, while the other monomer binds to the replacement base PreQ1. It depends on Zn(2+) as a cofactor.

The catalysed reaction is 7-aminomethyl-7-carbaguanine + guanosine(34) in tRNA = 7-aminomethyl-7-carbaguanosine(34) in tRNA + guanine. Its pathway is tRNA modification; tRNA-queuosine biosynthesis. Catalyzes the base-exchange of a guanine (G) residue with the queuine precursor 7-aminomethyl-7-deazaguanine (PreQ1) at position 34 (anticodon wobble position) in tRNAs with GU(N) anticodons (tRNA-Asp, -Asn, -His and -Tyr). Catalysis occurs through a double-displacement mechanism. The nucleophile active site attacks the C1' of nucleotide 34 to detach the guanine base from the RNA, forming a covalent enzyme-RNA intermediate. The proton acceptor active site deprotonates the incoming PreQ1, allowing a nucleophilic attack on the C1' of the ribose to form the product. After dissociation, two additional enzymatic reactions on the tRNA convert PreQ1 to queuine (Q), resulting in the hypermodified nucleoside queuosine (7-(((4,5-cis-dihydroxy-2-cyclopenten-1-yl)amino)methyl)-7-deazaguanosine). The polypeptide is Queuine tRNA-ribosyltransferase (Novosphingobium aromaticivorans (strain ATCC 700278 / DSM 12444 / CCUG 56034 / CIP 105152 / NBRC 16084 / F199)).